A 311-amino-acid polypeptide reads, in one-letter code: Methionyl-tRNA formyltransferase (311 aa).

Position 112–115 (112–115 (SLLP)) interacts with (6S)-5,6,7,8-tetrahydrofolate.

It belongs to the Fmt family.

The catalysed reaction is L-methionyl-tRNA(fMet) + (6R)-10-formyltetrahydrofolate = N-formyl-L-methionyl-tRNA(fMet) + (6S)-5,6,7,8-tetrahydrofolate + H(+). Attaches a formyl group to the free amino group of methionyl-tRNA(fMet). The formyl group appears to play a dual role in the initiator identity of N-formylmethionyl-tRNA by promoting its recognition by IF2 and preventing the misappropriation of this tRNA by the elongation apparatus. The protein is Methionyl-tRNA formyltransferase of Bradyrhizobium diazoefficiens (strain JCM 10833 / BCRC 13528 / IAM 13628 / NBRC 14792 / USDA 110).